Reading from the N-terminus, the 875-residue chain is Probable ATP-dependent RNA helicase DDX10 (875 aa).

Residues 1 to 44 (MGKTVASLGQGTRPDPVRSFNRWKKKHSHRQHQKKERRKQLKKP) form a disordered region. At T4 the chain carries Phosphothreonine. S7 carries the post-translational modification Phosphoserine. Positions 21–41 (NRWKKKHSHRQHQKKERRKQL) are enriched in basic residues. Positions 69-97 (TRFSDFPLSKKTLKGLQEAQYRLVTEIQK) match the Q motif motif. ATP is bound by residues 89-91 (YRL), Q96, and 113-120 (AKTGSGKT). Residues 100-274 (IGLALQGKDV…RLSLKDPEYV (175 aa)) form the Helicase ATP-binding domain. A DEAD box motif is present at residues 222–225 (DEAD). A Helicase C-terminal domain is found at 300-449 (KISVLFSFLR…EIKINPEKLI (150 aa)). The segment at 525 to 612 (LVKNPVTEAV…HTESVVSIEE (88 aa)) is disordered. S540 carries the phosphoserine modification. K556 carries the N6-acetyllysine modification. The segment covering 562–575 (KSGERLEETEHRLA) has biased composition (basic and acidic residues). Acidic residues predominate over residues 578-593 (DGDEEQDEETEDEETE). T587 carries the phosphothreonine modification. The span at 594-604 (DHLGKAREPHT) shows a compositional bias: basic and acidic residues. K652 participates in a covalent cross-link: Glycyl lysine isopeptide (Lys-Gly) (interchain with G-Cter in SUMO2). Basic and acidic residues predominate over residues 734-744 (EEDKFDKEEYR). Positions 734–860 (EEDKFDKEEY…VEPLDTGLSL (127 aa)) are disordered. Residues 745–754 (KKIKAKHRER) are compositionally biased toward basic residues. Positions 755–774 (RLKEREARREANKRQAKARD) are enriched in basic and acidic residues. Positions 775–789 (EEEAFLDWSDEDDGG) are enriched in acidic residues. S783 is modified (phosphoserine). Residues 797–831 (DPDKHRSSEESESEDTNHKMSDTKKKQETRKRNNT) show a composition bias toward basic and acidic residues.

Belongs to the DEAD box helicase family. DDX10/DBP4 subfamily. Interacts with AIM2; this interaction promotes AIM2 stability. Interacts with SCNA; this interaction causes DDX10 mislocalization to the nucleoplasm and cytoplasmic inclusions.

It localises to the cytoplasm. The protein resides in the nucleus. It is found in the nucleolus. It carries out the reaction ATP + H2O = ADP + phosphate + H(+). Functionally, putative ATP-dependent RNA helicase that plays various role in innate immunity or inflammation. Plays a role in the enhancement of AIM2-induced inflammasome activation by interacting with AIM2 and stabilizing its protein level. Negatively regulates viral infection by promoting interferon beta production and interferon stimulated genes/ISGs expression. This chain is Probable ATP-dependent RNA helicase DDX10 (Ddx10), found in Mus musculus (Mouse).